An 88-amino-acid polypeptide reads, in one-letter code: Small ribosomal subunit protein uS17 (88 aa).

It belongs to the universal ribosomal protein uS17 family. Part of the 30S ribosomal subunit.

One of the primary rRNA binding proteins, it binds specifically to the 5'-end of 16S ribosomal RNA. The chain is Small ribosomal subunit protein uS17 from Lactobacillus helveticus (strain DPC 4571).